The sequence spans 154 residues: uncharacterized protein (154 aa).

Disordered stretches follow at residues 23–63 (ERVG…VVLK) and 79–154 (IKAA…DENE). Positions 43–56 (PDEDGDHSDKEDEQ) are enriched in acidic residues. Ser-50 bears the Phosphoserine mark. N6-acetyllysine is present on Lys-108. Position 146 is a phosphoserine (Ser-146).

This is an uncharacterized protein from Homo sapiens (Human).